Reading from the N-terminus, the 1637-residue chain is Probable serine/threonine-protein kinase gdt2 (1637 aa).

The N-terminal stretch at 1 to 19 (MNYILYILLILIIFSINNT) is a signal peptide. The Extracellular segment spans residues 20–896 (FSIGSFVYTP…IPVEKINLLP (877 aa)). The helical transmembrane segment at 897-917 (IIVPICVTVLVLLSILIVFFG) threads the bilayer. Residues 918-1637 (ARYYKHKKRR…NNNNNNNNNN (720 aa)) lie on the Cytoplasmic side of the membrane. Polar residues predominate over residues 977-990 (SDIQTQSENNNLEP). The tract at residues 977–1000 (SDIQTQSENNNLEPTTVETTTTTT) is disordered. Low complexity predominate over residues 991–1000 (TTVETTTTTT). The Protein kinase domain occupies 1290–1547 (IIIKNYISEG…LSKYLKHLLK (258 aa)). ATP is bound by residues 1296 to 1304 (ISEGTFGIV) and lysine 1317. Aspartate 1408 functions as the Proton acceptor in the catalytic mechanism. The segment at 1557–1637 (DKDKKNKKKN…NNNNNNNNNN (81 aa)) is disordered. Composition is skewed to low complexity over residues 1568 to 1589 (NNNN…NNNN) and 1597 to 1637 (NNNI…NNNN).

It in the N-terminal section; belongs to the GDT family. In the C-terminal section; belongs to the protein kinase superfamily. TKL Ser/Thr protein kinase family.

The protein localises to the membrane. The catalysed reaction is L-seryl-[protein] + ATP = O-phospho-L-seryl-[protein] + ADP + H(+). It catalyses the reaction L-threonyl-[protein] + ATP = O-phospho-L-threonyl-[protein] + ADP + H(+). Its function is as follows. Regulates the transition between growth and differentiation. The protein is Probable serine/threonine-protein kinase gdt2 (gdt2) of Dictyostelium discoideum (Social amoeba).